An 887-amino-acid chain; its full sequence is Golgin IMH1 (887 aa).

4 disordered regions span residues 16–50, 142–214, 240–301, and 783–822; these read LAKG…EELP, QESL…MKSQ, GASQ…SAGD, and LKMS…SISS. 2 stretches are compositionally biased toward basic and acidic residues: residues 37–50 and 145–210; these read GRRE…EELP and LEQR…HAAE. Residues 118–241 adopt a coiled-coil conformation; sequence AMLTEEIKRI…YKSTIQELGA (124 aa). The span at 240-254 shows a compositional bias: polar residues; it reads GASQATGEAQPSSEA. A compositionally biased stretch (basic residues) spans 258 to 273; that stretch reads RGKKGKGKRGKGKKRV. Residues 299-788 are a coiled coil; the sequence is AGDEIIEAIE…LSTQLKMSKD (490 aa). Positions 788–807 are enriched in low complexity; it reads DMSSQSRHSSRSGSLVSPSS. Residues 808-822 are compositionally biased toward polar residues; sequence DNETGNSPRKISISS. The GRIP domain maps to 837–885; it reads EMESNEKLAYIRNVLLGFLEHREQRSQLLPVVSTLLQLSSHDEKRLLTS.

The protein localises to the cytoplasm. The protein resides in the golgi apparatus membrane. Its function is as follows. Involved in vesicular transport between an endosomal compartment and the Golgi apparatus. The polypeptide is Golgin IMH1 (IMH1) (Eremothecium gossypii (strain ATCC 10895 / CBS 109.51 / FGSC 9923 / NRRL Y-1056) (Yeast)).